Reading from the N-terminus, the 277-residue chain is Large ribosomal subunit protein uL2 (277 aa).

Positions 218-277 (PTVRGSVMNPNDHPHGGGEGKAPVGRKAPSTPWGKPALGLKTRNKKAKSDKLIVRRRNEK) are disordered. Residues 264–277 (AKSDKLIVRRRNEK) are compositionally biased toward basic and acidic residues.

The protein belongs to the universal ribosomal protein uL2 family. In terms of assembly, part of the 50S ribosomal subunit. Forms a bridge to the 30S subunit in the 70S ribosome.

In terms of biological role, one of the primary rRNA binding proteins. Required for association of the 30S and 50S subunits to form the 70S ribosome, for tRNA binding and peptide bond formation. It has been suggested to have peptidyltransferase activity; this is somewhat controversial. Makes several contacts with the 16S rRNA in the 70S ribosome. The protein is Large ribosomal subunit protein uL2 of Streptococcus pyogenes serotype M4 (strain MGAS10750).